A 751-amino-acid polypeptide reads, in one-letter code: Lysine decarboxylase LdcA (751 aa).

The protein belongs to the Orn/Lys/Arg decarboxylase class-I family. In terms of assembly, homodecamer.

The catalysed reaction is L-lysine + H(+) = cadaverine + CO2. Functionally, plays an essential role in lysine utilization by acting as a lysine decarboxylase. This Pseudomonas aeruginosa (strain ATCC 15692 / DSM 22644 / CIP 104116 / JCM 14847 / LMG 12228 / 1C / PRS 101 / PAO1) protein is Lysine decarboxylase LdcA.